Consider the following 421-residue polypeptide: Probable 26S proteasome regulatory subunit rpn6 (421 aa).

The PCI domain occupies 221–390; it reads DFKTAYSYFY…GCLIVYDEPQ (170 aa).

The protein belongs to the proteasome subunit S9 family. In terms of assembly, component of the lid subcomplex of the 19S proteasome regulatory particle complex (also named PA700 complex). The 26S proteasome consists of a 20S proteasome core and two 19S regulatory subunits.

Component of the lid subcomplex of the 26S proteasome, a multiprotein complex involved in the ATP-dependent degradation of ubiquitinated proteins. In the complex, rpn6 is required for proteasome assembly. This Schizosaccharomyces pombe (strain 972 / ATCC 24843) (Fission yeast) protein is Probable 26S proteasome regulatory subunit rpn6 (rpn6).